The chain runs to 362 residues: Prostaglandin F2-alpha receptor (362 aa).

The Extracellular segment spans residues 1 to 31 (MSTNNSVQPVSPASELLSNTTCQLEEDLSIS). N-linked (GlcNAc...) asparagine glycosylation is found at Asn-4 and Asn-19. The helical transmembrane segment at 32–54 (FSIIFMTVGILSNSLAIAILMKA) threads the bilayer. Topologically, residues 55 to 69 (YQRFRQKYKSSFLLL) are cytoplasmic. The helical transmembrane segment at 70–90 (ASALVITDFFGHLINGTIAVF) threads the bilayer. At 91–109 (VYASDKDWIYFDKSNILCS) the chain is on the extracellular side. Cys-108 and Cys-186 are joined by a disulfide. Residues 110-131 (IFGICMVFSGLCPLFLGSLMAI) traverse the membrane as a helical segment. At 132–152 (ERCIGVTKPIFHSTKITTKHV) the chain is on the cytoplasmic side. Residues 153–175 (KMMLSGVCFFAVFVALLPILGHR) form a helical membrane-spanning segment. Residues 176-198 (DYKIQASRTWCFYKTDQIKDWED) lie on the Extracellular side of the membrane. A helical transmembrane segment spans residues 199–224 (RFYLLLFAFLGLLALGISFVCNAITG). The Cytoplasmic portion of the chain corresponds to 225–250 (ISLLKVKFRSQQHRQGRSHHFEMVIQ). A helical transmembrane segment spans residues 251 to 267 (LLGIMCVSCICWSPFLV). Residues 268–285 (TMASIGMNIQDFKDSCER) are Extracellular-facing. A helical transmembrane segment spans residues 286–307 (TLFTLRMATWNQILDPWVYILL). Residues 308–362 (RKAVLRNLYVCTRRCCGVHVISLHVWELSSIKNSLKVAAISDLPVTEKVTQQTST) lie on the Cytoplasmic side of the membrane.

Belongs to the G-protein coupled receptor 1 family.

It localises to the cell membrane. In terms of biological role, receptor for prostaglandin F2-alpha (PGF2-alpha). The activity of this receptor is mediated by G proteins which activate a phosphatidylinositol-calcium second messenger system. Initiates luteolysis in the corpus luteum. The polypeptide is Prostaglandin F2-alpha receptor (PTGFR) (Ovis aries (Sheep)).